Reading from the N-terminus, the 568-residue chain is TWiK family of potassium channels protein 9 (568 aa).

At 1–15 the chain is on the cytoplasmic side; it reads MKCSFHIPEKYQWAS. A helical transmembrane segment spans residues 16–36; that stretch reads TLFVHVALIAGVAVYTVFGAL. The pore-forming intramembrane region spans 163–183; it reads IGNSVIFAFTVITTIGYGHVA. Residues 191 to 211 form a helical membrane-spanning segment; the sequence is LFLIFYGVIGVPFTLLTIADL. At 212–316 the chain is on the cytoplasmic side; it reads GMFLTRFLKN…NNEPRKTEES (105 aa). Disordered regions lie at residues 243-262 and 274-314; these read QRNK…RSEV and MRTA…RKTE. Acidic residues predominate over residues 297–307; the sequence is GKEEDEEEPEN. A helical transmembrane segment spans residues 317-337; it reads IALGITFTCYLVAGAKILSVY. Residues 343–363 constitute an intramembrane region (pore-forming); sequence FFKALYFNFVTLTTIGLGDFV. A helical transmembrane segment spans residues 370–390; the sequence is LLITLIYIGIGLALTTMAIEI. Topologically, residues 391–568 are cytoplasmic; that stretch reads AADLLKKLHY…LRTYTNARRK (178 aa).

It belongs to the two pore domain potassium channel (TC 1.A.1.8) family. In terms of tissue distribution, expressed in ray A-type neurons and cell bodies. Also seen in head, pharyngeal and phasmid neurons, and in coelomocytes.

The protein resides in the membrane. Potassium channel protein that may be component of regulatory network that controls ray development and function. The protein is TWiK family of potassium channels protein 9 (twk-9) of Caenorhabditis elegans.